Reading from the N-terminus, the 583-residue chain is Isocitrate dehydrogenase kinase/phosphatase (583 aa).

ATP-binding positions include 315 to 321 and Lys-336; that span reads APGIRGM. Residue Asp-371 is part of the active site.

This sequence belongs to the AceK family.

Its subcellular location is the cytoplasm. The catalysed reaction is L-seryl-[isocitrate dehydrogenase] + ATP = O-phospho-L-seryl-[isocitrate dehydrogenase] + ADP + H(+). In terms of biological role, bifunctional enzyme which can phosphorylate or dephosphorylate isocitrate dehydrogenase (IDH) on a specific serine residue. This is a regulatory mechanism which enables bacteria to bypass the Krebs cycle via the glyoxylate shunt in response to the source of carbon. When bacteria are grown on glucose, IDH is fully active and unphosphorylated, but when grown on acetate or ethanol, the activity of IDH declines drastically concomitant with its phosphorylation. This is Isocitrate dehydrogenase kinase/phosphatase from Salmonella dublin (strain CT_02021853).